A 363-amino-acid polypeptide reads, in one-letter code: 3-dehydroquinate synthase (363 aa).

NAD(+) contacts are provided by residues 72-77, 130-131, lysine 142, and lysine 151; these read SGEKEK and TT. Zn(2+) contacts are provided by glutamate 184, histidine 247, and histidine 264.

Belongs to the sugar phosphate cyclases superfamily. Dehydroquinate synthase family. Co(2+) serves as cofactor. Requires Zn(2+) as cofactor. The cofactor is NAD(+).

It is found in the cytoplasm. It catalyses the reaction 7-phospho-2-dehydro-3-deoxy-D-arabino-heptonate = 3-dehydroquinate + phosphate. It functions in the pathway metabolic intermediate biosynthesis; chorismate biosynthesis; chorismate from D-erythrose 4-phosphate and phosphoenolpyruvate: step 2/7. Its function is as follows. Catalyzes the conversion of 3-deoxy-D-arabino-heptulosonate 7-phosphate (DAHP) to dehydroquinate (DHQ). This Bacillus thuringiensis subsp. konkukian (strain 97-27) protein is 3-dehydroquinate synthase.